Reading from the N-terminus, the 580-residue chain is N(6)-adenosine-methyltransferase catalytic subunit METTL3 (580 aa).

Residues 1-70 (MSDTWSSIQA…PKPSTASAVP (70 aa)) are disordered. S2 is subject to N-acetylserine; alternate. S2 carries the post-translational modification Phosphoserine; alternate. Positions 28 to 37 (QDSGHLDLRN) are enriched in basic and acidic residues. A phosphoserine mark is found at S43, S48, and S50. Residues K177, K211, K212, and K215 each participate in a glycyl lysine isopeptide (Lys-Gly) (interchain with G-Cter in SUMO1) cross-link. The disordered stretch occupies residues 198-219 (LNSSASEPAKEPAKKSRKHAAS). The Nuclear localization signal signature appears at 210–215 (AKKSRK). 2 positions are modified to phosphoserine: S219 and S243. T348 is modified (phosphothreonine). S350 is subject to Phosphoserine. Residues 377 to 378 (DI) and D395 contribute to the S-adenosyl-L-methionine site. Residues 396 to 410 (PPWDIHMELPYGTLT) are gate loop 1. 2 interaction with METTL14 regions span residues 450-454 (ERVDE) and 464-480 (QRIIRTGRTGHWLNHGK). An interphase loop region spans residues 462 to 479 (QLQRIIRTGRTGHWLNHG). The positively charged region required for RNA-binding stretch occupies residues 465–478 (RIIRTGRTGHWLNH). The interval 507–515 (VRSTSHKPD) is gate loop 2. S-adenosyl-L-methionine-binding positions include K513, 536-539 (RPHN), and 549-550 (NQ).

Belongs to the MT-A70-like family. As to quaternary structure, heterodimer; heterodimerizes with METTL14 to form an antiparallel heterodimer that constitutes an active methyltransferase. Component of the WMM complex, a N6-methyltransferase complex composed of a catalytic subcomplex, named MAC, and of an associated subcomplex, named MACOM. The MAC subcomplex is composed of METTL3 and METTL14. The MACOM subcomplex is composed of WTAP, ZC3H13, CBLL1/HAKAI, VIRMA, and, in some cases of RBM15 (RBM15 or RBM15B). Interacts with NCBP1/CBP80. Interacts with EIF4E. Interacts with EIF3B. In terms of processing, sumoylation inhibits the N6-adenosine-methyltransferase activity. Sumoylation does not affect subcellular location or interaction with METTL14. Desumoylated by SENP1. As to expression, widely expressed at low level. Expressed in spleen, thymus, prostate, testis, ovary, small intestine, colon and peripheral blood leukocytes.

It localises to the nucleus. The protein localises to the nucleus speckle. Its subcellular location is the cytoplasm. The enzyme catalyses an adenosine in mRNA + S-adenosyl-L-methionine = an N(6)-methyladenosine in mRNA + S-adenosyl-L-homocysteine + H(+). Methyltransferase activity is regulated by miRNAs via a sequence pairing mechanism. Methyltransferase activity is inhibited by sumoylation. The METTL3-METTL14 heterodimer forms a N6-methyltransferase complex that methylates adenosine residues at the N(6) position of some RNAs and regulates various processes such as the circadian clock, differentiation of embryonic and hematopoietic stem cells, cortical neurogenesis, response to DNA damage, differentiation of T-cells and primary miRNA processing. In the heterodimer formed with METTL14, METTL3 constitutes the catalytic core. N6-methyladenosine (m6A), which takes place at the 5'-[AG]GAC-3' consensus sites of some mRNAs, plays a role in mRNA stability, processing, translation efficiency and editing. M6A acts as a key regulator of mRNA stability: methylation is completed upon the release of mRNA into the nucleoplasm and promotes mRNA destabilization and degradation. In embryonic stem cells (ESCs), m6A methylation of mRNAs encoding key naive pluripotency-promoting transcripts results in transcript destabilization, promoting differentiation of ESCs. M6A regulates the length of the circadian clock: acts as an early pace-setter in the circadian loop by putting mRNA production on a fast-track for facilitating nuclear processing, thereby providing an early point of control in setting the dynamics of the feedback loop. M6A also regulates circadian regulation of hepatic lipid metabolism. M6A regulates spermatogonial differentiation and meiosis and is essential for male fertility and spermatogenesis. Also required for oogenesis. Involved in the response to DNA damage: in response to ultraviolet irradiation, METTL3 rapidly catalyzes the formation of m6A on poly(A) transcripts at DNA damage sites, leading to the recruitment of POLK to DNA damage sites. M6A is also required for T-cell homeostasis and differentiation: m6A methylation of transcripts of SOCS family members (SOCS1, SOCS3 and CISH) in naive T-cells promotes mRNA destabilization and degradation, promoting T-cell differentiation. Inhibits the type I interferon response by mediating m6A methylation of IFNB. M6A also takes place in other RNA molecules, such as primary miRNA (pri-miRNAs). Mediates m6A methylation of Xist RNA, thereby participating in random X inactivation: m6A methylation of Xist leads to target YTHDC1 reader on Xist and promote transcription repression activity of Xist. M6A also regulates cortical neurogenesis: m6A methylation of transcripts related to transcription factors, neural stem cells, the cell cycle and neuronal differentiation during brain development promotes their destabilization and decay, promoting differentiation of radial glial cells. METTL3 mediates methylation of pri-miRNAs, marking them for recognition and processing by DGCR8. Acts as a positive regulator of mRNA translation independently of the methyltransferase activity: promotes translation by interacting with the translation initiation machinery in the cytoplasm. Its overexpression in a number of cancer cells suggests that it may participate in cancer cell proliferation by promoting mRNA translation. During human coronavirus SARS-CoV-2 infection, adds m6A modifications in SARS-CoV-2 RNA leading to decreased RIGI binding and subsequently dampening the sensing and activation of innate immune responses. The sequence is that of N(6)-adenosine-methyltransferase catalytic subunit METTL3 from Homo sapiens (Human).